The chain runs to 458 residues: Ammonium transporter Rh type B (458 aa).

The Cytoplasmic portion of the chain corresponds to 1 to 13 (MAGSPSRAAGRRL). Residues 14 to 34 (QLPLLCLFLQGATAVLFAVFV) form a helical membrane-spanning segment. The Extracellular portion of the chain corresponds to 35–61 (RYNHKTDAALWHRSNHSNADNEFYFRY). Asn-49 carries N-linked (GlcNAc...) asparagine glycosylation. A helical membrane pass occupies residues 62 to 82 (PSFQDVHAMVFVGFGFLMVFL). Residues 83-86 (QRYG) lie on the Cytoplasmic side of the membrane. A helical membrane pass occupies residues 87–107 (FSSVGFTFLLAAFALQWSTLV). Residues 108-124 (QGFLHSFHGGHIHVGVE) are Extracellular-facing. Residues 125-145 (SMINADFCAGAVLISFGAVLG) traverse the membrane as a helical segment. Over 146-149 (KTGP) the chain is Cytoplasmic. Residues 150–170 (AQLLLMALLEVVLFGINEFVL) form a helical membrane-spanning segment. The Extracellular segment spans residues 171–178 (LHLLGVRD). A helical membrane pass occupies residues 179-201 (AGGSMTIHTFGAYFGLVLSRVLY). At 202–219 (RPQLEKSKHRQGSVYHSD) the chain is on the cytoplasmic side. The chain crosses the membrane as a helical span at residues 220-240 (LFAMIGTIFLWIFWPSFNAAL). Over 241–251 (TALGAGQHRTA) the chain is Extracellular. Residues 252–272 (LNTYYSLAASTLGTFALSALV) form a helical membrane-spanning segment. Residues 273 to 282 (GEDGRLDMVH) are Cytoplasmic-facing. A helical transmembrane segment spans residues 283 to 303 (IQNAALAGGVVVGTSSEMMLT). Residue Pro-304 is a topological domain, extracellular. The chain crosses the membrane as a helical span at residues 305–325 (FGALTAGFLAGTVSTLGYKFF). Residues 326 to 346 (RPILESKFKVQDTCGVHNLHG) are Cytoplasmic-facing. Residues 347-367 (MPGVLGALLGVLVAGLATHEA) form a helical membrane-spanning segment. Topologically, residues 368–393 (YGDGLESVFPLIAEGQRSATSQAMHQ) are extracellular. The chain crosses the membrane as a helical span at residues 394 to 414 (LFGLFVTLMFASVGGGLGGLL). Residues 415–458 (LKLPFLDSPPDSQCYEDQVHWQVPGEHEDKAQRPLRVEEADTQA) lie on the Cytoplasmic side of the membrane. The segment at 416-424 (KLPFLDSPP) is interaction with ANK3. A Basolateral sorting signal motif is present at residues 429-432 (YEDQ). Residues 439–458 (GEHEDKAQRPLRVEEADTQA) form a disordered region.

It belongs to the ammonium transporter (TC 2.A.49) family. Rh subfamily. As to quaternary structure, interacts (via C-terminus) with ANK2 and ANK3; required for targeting to the basolateral membrane. N-glycosylated.

The protein resides in the cell membrane. It is found in the basolateral cell membrane. It catalyses the reaction NH4(+)(in) = NH4(+)(out). The catalysed reaction is methylamine(out) = methylamine(in). It carries out the reaction CO2(out) = CO2(in). In terms of biological role, ammonium transporter involved in the maintenance of acid-base homeostasis. Transports ammonium and its related derivative methylammonium across the basolateral plasma membrane of epithelial cells likely contributing to renal transepithelial ammonia transport and ammonia metabolism. May transport either NH4(+) or NH3 ammonia species predominantly mediating an electrogenic NH4(+) transport. May act as a CO2 channel providing for renal acid secretion. This chain is Ammonium transporter Rh type B (RHBG), found in Pan troglodytes (Chimpanzee).